We begin with the raw amino-acid sequence, 173 residues long: Flavodoxin 2 (173 aa).

The Flavodoxin-like domain maps to 3–165; the sequence is MGLFYGSSTC…RIQTWCEQIL (163 aa).

It belongs to the flavodoxin family. FMN is required as a cofactor.

Functionally, low-potential electron donor to a number of redox enzymes. The chain is Flavodoxin 2 (fldB) from Salmonella typhi.